Consider the following 519-residue polypeptide: Membrane-bound glycerophospholipid O-acyltransferase 2 (519 aa).

6 helical membrane passes run 22–42, 61–81, 88–108, 184–204, 236–256, and 288–305; these read PIDQ…AVWF, TLLG…HFLV, CIMI…FALG, FMGI…FIEG, LLVC…LPVE, and YFAW…GFGF. Catalysis depends on residues asparagine 341 and histidine 372. The next 3 helical transmembrane spans lie at 365-385, 415-435, and 443-463; these read FFLS…FLTG, IITW…FVLL, and FYRS…LLLP.

The protein belongs to the membrane-bound acyltransferase family.

The protein resides in the endoplasmic reticulum membrane. It carries out the reaction a 1-acyl-sn-glycero-3-phosphocholine + an acyl-CoA = a 1,2-diacyl-sn-glycero-3-phosphocholine + CoA. The enzyme catalyses a 1-acyl-sn-glycero-3-phosphoethanolamine + an acyl-CoA = a 1,2-diacyl-sn-glycero-3-phosphoethanolamine + CoA. The catalysed reaction is a 1-acyl-sn-glycero-3-phosphate + an acyl-CoA = a 1,2-diacyl-sn-glycero-3-phosphate + CoA. It catalyses the reaction (9Z)-hexadecenoyl-CoA + 1-hexadecanoyl-sn-glycero-3-phosphocholine = 1-hexadecanoyl-2-(9Z-hexadecenoyl)-sn-glycero-3-phosphocholine + CoA. It carries out the reaction 1-hexadecanoyl-sn-glycero-3-phosphoethanolamine + (9Z)-octadecenoyl-CoA = 1-hexadecanoyl-2-(9Z-octadecenoyl)-sn-glycero-3-phosphoethanolamine + CoA. The enzyme catalyses 1-hexadecanoyl-sn-glycero-3-phosphoethanolamine + (9Z)-hexadecenoyl-CoA = 1-hexadecanoyl-2-(9Z)-hexadecenoyl-sn-glycero-3-phosphoethanolamine + CoA. The catalysed reaction is 1-(9Z-octadecenoyl)-sn-glycero-3-phospho-L-serine + hexadecanoyl-CoA = 1-(9Z)-octadecenoyl-2-hexadecanoyl-sn-glycero-3-phosphoserine + CoA. It catalyses the reaction (9Z,12Z)-octadecadienoyl-CoA + 1-hexadecanoyl-sn-glycero-3-phosphocholine = 1-hexadecanoyl-2-(9Z,12Z-octadecadienoyl)-sn-glycero-3-phosphocholine + CoA. It carries out the reaction 1-hexadecanoyl-sn-glycero-3-phosphocholine + (9Z)-octadecenoyl-CoA = 1-hexadecanoyl-2-(9Z-octadecenoyl)-sn-glycero-3-phosphocholine + CoA. The enzyme catalyses 1-hexadecanoyl-sn-glycero-3-phosphate + (9Z)-hexadecenoyl-CoA = 1-hexadecanoyl-2-[(9Z)-hexadec-9-enoyl]-sn-glycero-3-phosphate + CoA. The catalysed reaction is 1-hexadecanoyl-sn-glycero-3-phosphate + (9Z)-octadecenoyl-CoA = 1-hexadecanoyl-2-(9Z-octadecenoyl)-sn-glycero-3-phosphate + CoA. It catalyses the reaction a 1-O-(1Z-alkenyl)-sn-glycero-3-phosphocholine + (9Z)-octadecenoyl-CoA = 1-O-(1Z)-alkenyl-2-(9Z)-octadecenoyl-sn-glycero-3-phosphocholine + CoA. It carries out the reaction a 1-O-(1Z-alkenyl)-sn-glycero-3-phosphoethanolamine + (9Z)-octadecenoyl-CoA = 1-O-(1Z)-alkenyl-2-(9Z)-octadecenoyl-sn-glycero-3-phosphoethanolamine + CoA. The enzyme catalyses 1-octadecanoyl-sn-glycero-3-phosphoethanolamine + (9Z)-octadecenoyl-CoA = 1-octadecanoyl-2-(9Z-octadecenoyl)-sn-glycero-3-phosphoethanolamine + CoA. The catalysed reaction is 1-octadecanoyl-sn-glycero-3-phosphocholine + (9Z)-octadecenoyl-CoA = 1-octadecanoyl-2-(9Z-octadecenoyl)-sn-glycero-3-phosphocholine + CoA. It catalyses the reaction 1-(9Z-octadecenoyl)-sn-glycero-3-phosphoethanolamine + (9Z)-octadecenoyl-CoA = 1,2-di-(9Z-octadecenoyl)-sn-glycero-3-phosphoethanolamine + CoA. Its pathway is lipid metabolism; phospholipid metabolism. With respect to regulation, partially inhibited by thimerosal. Its function is as follows. Acyltransferase which catalyzes the transfer of an acyl group from an acyl-CoA to a lysophospholipid leading to the production of a phospholipid and participates in the reacylation step of the phospholipid remodeling pathway also known as the Lands cycle. May catalyze preferentially the acylation of lysophosphatidylethanolamine (1-acyl-sn-glycero-3-phosphoethanolamine or LPE) and lysophosphatidic acid (LPA) and to a lesser extend lysophosphatidylcholine (LPC) and lysophosphatidylserine (LPS). Prefers oleoyl-CoA as the acyl donor. May be involved in chondrocyte differentiation. This is Membrane-bound glycerophospholipid O-acyltransferase 2 from Rattus norvegicus (Rat).